The sequence spans 310 residues: Ribosomal RNA small subunit methyltransferase H (310 aa).

Residues 33–35 (AGH), aspartate 53, phenylalanine 79, aspartate 100, and glutamine 107 contribute to the S-adenosyl-L-methionine site.

The protein belongs to the methyltransferase superfamily. RsmH family.

It is found in the cytoplasm. The catalysed reaction is cytidine(1402) in 16S rRNA + S-adenosyl-L-methionine = N(4)-methylcytidine(1402) in 16S rRNA + S-adenosyl-L-homocysteine + H(+). Specifically methylates the N4 position of cytidine in position 1402 (C1402) of 16S rRNA. The protein is Ribosomal RNA small subunit methyltransferase H of Desulfitobacterium hafniense (strain DSM 10664 / DCB-2).